The primary structure comprises 226 residues: NADH-ubiquinone oxidoreductase 19.3 kDa subunit, mitochondrial (226 aa).

A disordered region spans residues 40–68 (ATGAVAPAGAQHGIARRERREVPLPSQEG). Residues Cys101, Cys102, Cys166, and Cys196 each contribute to the [4Fe-4S] cluster site.

Belongs to the complex I 20 kDa subunit family. Complex I is composed of about 40 different subunits. This is a component of the iron-sulfur (IP) fragment of the enzyme. Requires [4Fe-4S] cluster as cofactor.

The protein resides in the mitochondrion. It catalyses the reaction a ubiquinone + NADH + 5 H(+)(in) = a ubiquinol + NAD(+) + 4 H(+)(out). Its function is as follows. Core subunit of the mitochondrial membrane respiratory chain NADH dehydrogenase (Complex I) that is believed to belong to the minimal assembly required for catalysis. Complex I functions in the transfer of electrons from NADH to the respiratory chain. The immediate electron acceptor for the enzyme is believed to be ubiquinone. The protein is NADH-ubiquinone oxidoreductase 19.3 kDa subunit, mitochondrial of Neurospora crassa (strain ATCC 24698 / 74-OR23-1A / CBS 708.71 / DSM 1257 / FGSC 987).